A 232-amino-acid chain; its full sequence is Pyridoxine 5'-phosphate synthase (232 aa).

3-amino-2-oxopropyl phosphate is bound at residue asparagine 7. Residue aspartate 9 to histidine 10 participates in 1-deoxy-D-xylulose 5-phosphate binding. Residue arginine 18 participates in 3-amino-2-oxopropyl phosphate binding. Histidine 43 acts as the Proton acceptor in catalysis. 1-deoxy-D-xylulose 5-phosphate contacts are provided by arginine 45 and histidine 50. Catalysis depends on glutamate 69, which acts as the Proton acceptor. Threonine 99 contributes to the 1-deoxy-D-xylulose 5-phosphate binding site. Catalysis depends on histidine 185, which acts as the Proton donor. Residues glycine 186 and glycine 207–histidine 208 contribute to the 3-amino-2-oxopropyl phosphate site.

This sequence belongs to the PNP synthase family. As to quaternary structure, homooctamer; tetramer of dimers.

It localises to the cytoplasm. It catalyses the reaction 3-amino-2-oxopropyl phosphate + 1-deoxy-D-xylulose 5-phosphate = pyridoxine 5'-phosphate + phosphate + 2 H2O + H(+). Its pathway is cofactor biosynthesis; pyridoxine 5'-phosphate biosynthesis; pyridoxine 5'-phosphate from D-erythrose 4-phosphate: step 5/5. Its function is as follows. Catalyzes the complicated ring closure reaction between the two acyclic compounds 1-deoxy-D-xylulose-5-phosphate (DXP) and 3-amino-2-oxopropyl phosphate (1-amino-acetone-3-phosphate or AAP) to form pyridoxine 5'-phosphate (PNP) and inorganic phosphate. This chain is Pyridoxine 5'-phosphate synthase, found in Gluconobacter oxydans (strain 621H) (Gluconobacter suboxydans).